The chain runs to 244 residues: Glucosamine-6-phosphate deaminase (244 aa).

The active-site Proton acceptor; for enolization step is aspartate 67. Catalysis depends on asparagine 136, which acts as the For ring-opening step. The Proton acceptor; for ring-opening step role is filled by histidine 138. Glutamate 143 serves as the catalytic For ring-opening step.

Belongs to the glucosamine/galactosamine-6-phosphate isomerase family. NagB subfamily.

The catalysed reaction is alpha-D-glucosamine 6-phosphate + H2O = beta-D-fructose 6-phosphate + NH4(+). It participates in amino-sugar metabolism; N-acetylneuraminate degradation; D-fructose 6-phosphate from N-acetylneuraminate: step 5/5. Functionally, catalyzes the reversible isomerization-deamination of glucosamine 6-phosphate (GlcN6P) to form fructose 6-phosphate (Fru6P) and ammonium ion. The protein is Glucosamine-6-phosphate deaminase of Clostridium botulinum (strain 657 / Type Ba4).